Here is a 740-residue protein sequence, read N- to C-terminus: MEQTYEYAWIIPFIPLPVPMLIGAGLILFPTATKSFRRMWAFQSVLLLSIVMIFSIYLSIQQINSSSFYQYVWSWIINNDFSLDFGYLIDPLTSIMSILITTVGIMVLIYSDNYMAHDQGYLRFFAYMSFFSTSMLGLVTSSNLIQIYIFWELVGLCSYLLIGFWFTRPVAANACQKAFVTNRVGDFGLLLGILGFYWITGSFEFRDLFEIFNNLSSNNEVNFLFVTLCAVLLFAGAVAKSAQFPLHVWLPDAMEGPTPISALIHAATMVAAGIFLVARLLPLFRVIPYIMYLISVIGIITVLLGATLALAQKDIKRGLAYSTMSQLGYMMLALGMGSYRSALFHLITHAYSKALLFLGSGSIIHSMETIVGYSPAKSQNMGLMGGLRKHVPITQITFLLGTLSLCGIPPLACFWSKDEILNDSWLYSPIFAIIAWATAGLTAFYMFRIYLLTFEGHLNVHFQNYGGKQKTPFYSISLWGKKGVKKNSYLLTMNNNESTYFFSKTKYPIDKNGRKMTRPFMTIAHFEHKTVYSYPYESDNTMLFPIFVLGLFTLFVGSIGIPFNQEGVNLDILSKWLAPSINLLHQKSNNSMDWNEFLKDAVLSVSIAYFGIFLASFLYKPIYSSLKNFELINSFVKKGPKRILWDKIINGIYDWSYNRAYIDAFYTRFFVGGIRGLAEFIHFFDRRVIDGMTNGVGVISFIVGEGIKYIGGGRISSYLFLYLAYVSVFLLVYYLFFLTF.

Transmembrane regions (helical) follow at residues 9–29 (WIIP…LILF), 40–60 (WAFQ…YLSI), 89–109 (IDPL…MVLI), 125–145 (FAYM…SNLI), 147–167 (IYIF…FWFT), 185–205 (GDFG…SFEF), 219–239 (NEVN…GAVA), 258–278 (TPIS…FLVA), 286–306 (VIPY…LLGA), 327–347 (LGYM…FHLI), 354–374 (ALLF…VGYS), 396–416 (ITFL…CFWS), 425–445 (WLYS…TAFY), 543–563 (LFPI…GIPF), 602–622 (VLSV…YKPI), and 718–738 (YLFL…LFFL).

It belongs to the complex I subunit 5 family. In terms of assembly, NDH is composed of at least 16 different subunits, 5 of which are encoded in the nucleus.

It is found in the plastid. The protein localises to the chloroplast thylakoid membrane. It catalyses the reaction a plastoquinone + NADH + (n+1) H(+)(in) = a plastoquinol + NAD(+) + n H(+)(out). It carries out the reaction a plastoquinone + NADPH + (n+1) H(+)(in) = a plastoquinol + NADP(+) + n H(+)(out). In terms of biological role, NDH shuttles electrons from NAD(P)H:plastoquinone, via FMN and iron-sulfur (Fe-S) centers, to quinones in the photosynthetic chain and possibly in a chloroplast respiratory chain. The immediate electron acceptor for the enzyme in this species is believed to be plastoquinone. Couples the redox reaction to proton translocation, and thus conserves the redox energy in a proton gradient. The polypeptide is NAD(P)H-quinone oxidoreductase subunit 5, chloroplastic (ndhF) (Atropa belladonna (Belladonna)).